Consider the following 953-residue polypeptide: MKSAKAKTVRKPVIKKGSQTNLKDPVGVYCRVRPLSFPDQECCVEVINSTTLQLHTPEGYRLNRNGDYKETQYSFKRVFGTHTTQKELFDVVANPLVDDLIHGKNGLLFTYGVTGSGKTYTMTGSPGSGGLLPRCLNMIFNSIGSFQAKRYVFKSNDRNSMEIQCEVDALLERQKREALPIPKTPSSKRQADPEFADMINVQEFCKAEEVDEDSVYGVFVSYIEIYNNYIYDLLEEVQFDPIKPKLPQSKTLREDKNHNMYVAGCTEVEVKSTEEAFEVFWRGQKKRRIANTHLNRESSRSHSVFSIKLVQAPLDADGDNVLQEKEQITISQLSLVDLAGSERTNRTKAEGNRLREAGNINQSLMTLRTCMEVLRENQTYGTNKMVPYRDSKLTHLFKNYFDGEGKVRMIVCVNPKAEDYEESLQVMRFAEVTQEVEVARPVDKVICGLTPGRRYRNLPRGGPVGDEPLVPEVILQSFPPLPPCKLLDINDEETLPKLADTLEKRHHLRQLMTEDLNKKCLAFKALLKEFDNSLSNKENYVQEKLNEREKVISGQKLEIERLEKKNKTLEYKIEILEKTTTIYEEDKRNLQQELESQNQKLQRQFSDKRRLEARLQGMVTETSMKWQKECERRVAATQLEMQNKLWVKDEKLKQLKAIVTEPKPEKPERPSRERDREKIIPRSVSPSPLPLSSNNIAQISNGQQLMSQPQLHRRSNSCSSISVASCISEWEQKLSPFSTPVNVTSLARHRQQEPGQSKTCIVSDRRRGMCWTEGREMVPTFSSEIGVEEDHCRRNTPIPVRHRRSRSAGSRWVDHKPASNVQTETVMQPHVPHAITVSVANEKALAKCEKYMLTHQELASDGEIQTKVIKGDVYKTRGGGQSVQFTDIETLKQELPTGSRKRRSSTLAPAQPDGTESEWTDVETRCSVAVEMRAGSQLGPGYQHHAQPKRKKP.

Residues 7 to 11 (KTVRK) carry the Nuclear localization signal motif. Positions 25-436 (PVGVYCRVRP…MRFAEVTQEV (412 aa)) constitute a Kinesin motor domain. 112–119 (GVTGSGKT) is an ATP binding site. Ser-155 and Ser-160 each carry phosphoserine. Residues 542–618 (QEKLNEREKV…RRLEARLQGM (77 aa)) are a coiled coil. Glycyl lysine isopeptide (Lys-Gly) (interchain with G-Cter in SUMO2) cross-links involve residues Lys-572 and Lys-587. A Phosphoserine modification is found at Ser-606. Glycyl lysine isopeptide (Lys-Gly) (interchain with G-Cter in SUMO2) cross-links involve residues Lys-625, Lys-648, Lys-663, and Lys-666. Residues 658–695 (IVTEPKPEKPERPSRERDREKIIPRSVSPSPLPLSSNN) form a disordered region. The segment covering 662–680 (PKPEKPERPSRERDREKII) has biased composition (basic and acidic residues). Over residues 681-693 (PRSVSPSPLPLSS) the composition is skewed to low complexity. Phosphoserine occurs at positions 683 and 685. A Phosphothreonine modification is found at Thr-739. Ser-807 is subject to Phosphoserine. Residues Lys-816 and Lys-847 each participate in a glycyl lysine isopeptide (Lys-Gly) (interchain with G-Cter in SUMO2) cross-link. Ser-860 is modified (phosphoserine). Residues Lys-867, Lys-870, and Lys-892 each participate in a glycyl lysine isopeptide (Lys-Gly) (interchain with G-Cter in SUMO2) cross-link. Disordered regions lie at residues 894 to 921 (ELPTGSRKRRSSTLAPAQPDGTESEWTD) and 934 to 953 (AGSQLGPGYQHHAQPKRKKP). Ser-904 carries the phosphoserine modification. Residue Thr-920 is modified to Phosphothreonine. Residue Lys-949 forms a Glycyl lysine isopeptide (Lys-Gly) (interchain with G-Cter in SUMO2) linkage.

It belongs to the TRAFAC class myosin-kinesin ATPase superfamily. Kinesin family. As to quaternary structure, heterotetramer of two molecules each of RACGAP1 and KIF23. Found in the centralspindlin complex. Interacts with RACGAP1; the interaction is direct. Interacts with ECT2 and PRC1. Interacts with ANXA11 during cytokinesis. Interacts with BIRC6/bruce and USP8/UBPY. Interacts with ARF6, forming heterodimers and heterotetramers. Ubiquitinated. Deubiquitinated by USP8/UBPY. As to expression, detected in testis and ovary from newborn mice (at protein level). Detected in brain, spinal cord and small intestine.

The protein localises to the nucleus. Its subcellular location is the cytoplasm. It localises to the cytoskeleton. It is found in the spindle. The protein resides in the midbody. The protein localises to the midbody ring. In terms of biological role, component of the centralspindlin complex that serves as a microtubule-dependent and Rho-mediated signaling required for the myosin contractile ring formation during the cell cycle cytokinesis. Essential for cytokinesis in Rho-mediated signaling. Required for the localization of ECT2 to the central spindle. Plus-end-directed motor enzyme that moves antiparallel microtubules in vitro. The sequence is that of Kinesin-like protein KIF23 (Kif23) from Mus musculus (Mouse).